Consider the following 107-residue polypeptide: Integration host factor subunit alpha (107 aa).

It belongs to the bacterial histone-like protein family. Heterodimer of an alpha and a beta chain.

In terms of biological role, this protein is one of the two subunits of integration host factor, a specific DNA-binding protein that functions in genetic recombination as well as in transcriptional and translational control. This chain is Integration host factor subunit alpha, found in Mesorhizobium japonicum (strain LMG 29417 / CECT 9101 / MAFF 303099) (Mesorhizobium loti (strain MAFF 303099)).